Reading from the N-terminus, the 85-residue chain is Large ribosomal subunit protein bL27 (85 aa).

The segment at 1-24 is disordered; that stretch reads MAHKKAGGSSRNGRDSNSKRLGVK.

The protein belongs to the bacterial ribosomal protein bL27 family.

This Nitrosospira multiformis (strain ATCC 25196 / NCIMB 11849 / C 71) protein is Large ribosomal subunit protein bL27.